The chain runs to 212 residues: Glycerol-3-phosphate acyltransferase (212 aa).

The next 5 membrane-spanning stretches (helical) occupy residues 3 to 23 (IIIM…LWIG), 70 to 90 (IPII…FAII), 110 to 130 (AGVL…IFLL), 143 to 163 (ITVA…GFIL), and 164 to 184 (TDYD…IIIR).

This sequence belongs to the PlsY family. In terms of assembly, probably interacts with PlsX.

It is found in the cell membrane. The enzyme catalyses an acyl phosphate + sn-glycerol 3-phosphate = a 1-acyl-sn-glycero-3-phosphate + phosphate. The protein operates within lipid metabolism; phospholipid metabolism. Its function is as follows. Catalyzes the transfer of an acyl group from acyl-phosphate (acyl-PO(4)) to glycerol-3-phosphate (G3P) to form lysophosphatidic acid (LPA). This enzyme utilizes acyl-phosphate as fatty acyl donor, but not acyl-CoA or acyl-ACP. The sequence is that of Glycerol-3-phosphate acyltransferase from Streptococcus agalactiae serotype III (strain NEM316).